Here is a 67-residue protein sequence, read N- to C-terminus: Putative sodium channel alpha-toxin Acra7 (67 aa).

Positions 2 to 66 (RDGYIVKPTN…PIKDPNQDCT (65 aa)) constitute an LCN-type CS-alpha/beta domain. 4 disulfide bridges follow: Cys12-Cys65, Cys16-Cys37, Cys23-Cys47, and Cys27-Cys49. A propeptide (removed by a carboxypeptidase) is located at residue Arg67.

Belongs to the long (4 C-C) scorpion toxin superfamily. Sodium channel inhibitor family. Alpha subfamily. Expressed by the venom gland.

The protein localises to the secreted. Its function is as follows. Alpha toxins bind voltage-independently at site-3 of sodium channels (Nav) and inhibit the inactivation of the activated channels, thereby blocking neuronal transmission. This chain is Putative sodium channel alpha-toxin Acra7, found in Androctonus crassicauda (Arabian fat-tailed scorpion).